Reading from the N-terminus, the 240-residue chain is UDP-2,3-diacylglucosamine hydrolase (240 aa).

5 residues coordinate Mn(2+): Asp8, His10, Asp41, Asn79, and His114. Substrate is bound at residue 79 to 80 (NR). Substrate-binding residues include Asp122, Ser160, Asn164, Lys167, and His195. The Mn(2+) site is built by His195 and His197.

The protein belongs to the LpxH family. Mn(2+) is required as a cofactor.

It is found in the cell inner membrane. The catalysed reaction is UDP-2-N,3-O-bis[(3R)-3-hydroxytetradecanoyl]-alpha-D-glucosamine + H2O = 2-N,3-O-bis[(3R)-3-hydroxytetradecanoyl]-alpha-D-glucosaminyl 1-phosphate + UMP + 2 H(+). Its pathway is glycolipid biosynthesis; lipid IV(A) biosynthesis; lipid IV(A) from (3R)-3-hydroxytetradecanoyl-[acyl-carrier-protein] and UDP-N-acetyl-alpha-D-glucosamine: step 4/6. Functionally, hydrolyzes the pyrophosphate bond of UDP-2,3-diacylglucosamine to yield 2,3-diacylglucosamine 1-phosphate (lipid X) and UMP by catalyzing the attack of water at the alpha-P atom. Involved in the biosynthesis of lipid A, a phosphorylated glycolipid that anchors the lipopolysaccharide to the outer membrane of the cell. The sequence is that of UDP-2,3-diacylglucosamine hydrolase from Pectobacterium carotovorum subsp. carotovorum (strain PC1).